The chain runs to 242 residues: Transcription factor bHLH100 (242 aa).

In terms of domain architecture, bHLH spans 61–113 (MKKLNHNASERERRKKINTMFSSLRSCLPPTNQTKKLSVSATVSQALKYIPEL).

As to quaternary structure, homodimer. Expressed constitutively in roots, leaves, and stems.

It localises to the nucleus. Plays a role in metal homeostasis. Confers tolerance to high zinc (Zn) and nickel (Ni). In Arabidopsis thaliana (Mouse-ear cress), this protein is Transcription factor bHLH100 (BHLH100).